Consider the following 101-residue polypeptide: UPF0235 protein SG2030 (101 aa).

Belongs to the UPF0235 family.

This chain is UPF0235 protein SG2030, found in Sodalis glossinidius (strain morsitans).